A 76-amino-acid chain; its full sequence is Contulakin-G (76 aa).

Positions 1 to 22 are cleaved as a signal peptide; the sequence is MQTAYWVMVMMMVWIAAPLSEG. Residues 23-50 constitute a propeptide that is removed on maturation; it reads GKLNDVIRGLVPDDITPQLILGSLISRR. Pyrrolidone carboxylic acid is present on Gln-51. The tract at residues 51–76 is disordered; sequence QSEEGGSNATKKPYILRASDQVASGP. O-linked (GalNAc...) threonine glycosylation is present at Thr-60. Positions 67-76 are excised as a propeptide; it reads RASDQVASGP.

It belongs to the conotoxin C superfamily. O-glycosylated. The glycosylation seems to enhance the affinity to the neurotensin receptors. In terms of tissue distribution, expressed by the venom duct.

Its subcellular location is the secreted. Its function is as follows. Acts as an agonist of neurotensin receptors. It binds to human neurotensin type 1 receptor (NTSR1), rat neurotensin types 1 and 2 receptors (NTSR1/NTSR2) and mouse neurotensin type 3 receptor (SORT1). In Conus geographus (Geography cone), this protein is Contulakin-G.